The sequence spans 510 residues: Adenosine deaminase 2 (510 aa).

The signal sequence occupies residues M1–S24. The interval R25–N95 is dimerization. Zn(2+) contacts are provided by H107 and H109. A substrate-binding site is contributed by D110. A glycan (N-linked (GlcNAc...) asparagine) is linked at N122. Positions N122 to T182 are PRB domain. The cysteines at positions 132 and 156 are disulfide-linked. An N-linked (GlcNAc...) asparagine glycan is attached at N171. Substrate contacts are provided by residues W201–F208, H290, and G323. H353 contributes to the Zn(2+) binding site. The Proton donor role is filled by E356. N375 carries an N-linked (GlcNAc...) asparagine glycan. H381 functions as the Proton acceptor in the catalytic mechanism. D438 is a Zn(2+) binding site. D439 is a binding site for substrate.

The protein belongs to the metallo-dependent hydrolases superfamily. Adenosine and AMP deaminases family. ADGF subfamily. As to quaternary structure, homodimer. Interacts with adenosine receptors. Binds heparin. The cofactor is Zn(2+).

It localises to the secreted. It catalyses the reaction adenosine + H2O + H(+) = inosine + NH4(+). Functionally, adenosine deaminase that may contribute to the degradation of extracellular adenosine, a signaling molecule that controls a variety of cellular responses. Requires elevated adenosine levels for optimal enzyme activity. Binds to cell surfaces via proteoglycans and may play a role in the regulation of cell proliferation and differentiation, independently of its enzyme activity. This is Adenosine deaminase 2 from Sus scrofa (Pig).